The chain runs to 399 residues: Sperm equatorial segment protein 1 (399 aa).

A signal peptide spans 1–18; the sequence is MKLVVLVALWLWPSSLLA. N-linked (GlcNAc...) asparagine glycosylation is present at N128. Residues 136 to 145 are compositionally biased toward basic and acidic residues; it reads EEPFIEKEPE. Positions 136-250 are disordered; the sequence is EEPFIEKEPE…PSAEDLPGRH (115 aa). Residues 157–167 show a composition bias toward acidic residues; that stretch reads PEPELEPEPEP. Residues 182–206 show a composition bias toward polar residues; sequence VTSTTPNKELTGTSRISSMATQPAN. A compositionally biased stretch (low complexity) spans 207 to 225; the sequence is TQATRITVTVKTTSTMDVS.

This sequence belongs to the SPESP1 family. Post-translationally, glycosylated. In testis there are two predominant forms of 77- and 67-kDa and a form of 47-kDa, whereas in epididymal sperm from caput, corpus, and cauda there are two forms of 47- and 43-kDa. Testis forms contain complex carbohydrate residues. Epididymal sperm forms are N-glycosylated. Then undergoes significant glycosylation in the testis and that the majority of these glycoconjugates are removed by the time sperm reach the caput epididymis. As to expression, testis specific.

Its subcellular location is the cytoplasmic vesicle. The protein localises to the secretory vesicle. It localises to the acrosome. Involved in fertilization ability of sperm. The polypeptide is Sperm equatorial segment protein 1 (Mus musculus (Mouse)).